A 1323-amino-acid chain; its full sequence is MAHKGTESKEQIWPYKITIGICAMNRKATSKPMRAIMKKIIDFYGQWVDSFIFPEQVIINEPVENWPLCHCLVSFHSTEFPLEKAIAYVKLRNPYVINNLDRQYDLLDRRTVFKILSDNGIEHPRHGYVIRGRPNEPDTELVEHPDHIEVNGEVFNKPFVEKPISSEDHNVYIYYPSSVGGGSQRLFRKINNRSSWYSPKSEVRKEGSYIYEEFIPADGTDVKVYAVGPFYAHAEARKAPGLDGKVERDSDGKEVRYPVILSNKEKQIAKKIVLAFGQTVCGFDLLRANGKSYVCDVNGFSFVKTSTKYYEDTAKILGNQIVRHYAKSKNWRVPSDMPQPPILDLGLGDDPPMITTPSGKLAELRCVVAVIRHGDRTPKQKMKLIVTDQRFFALFEKYDGYKKHEIKMKKPNQLMEVLELARALVIEKQRDRHQILEKLREGTGEEEIHKSEHDLEVCEEEMKKWEQMRTVLEMYGHFSGINRKVQMKYLKERETKTSDEELRREGPALLLILKWGGELTTAGNMQAEALGRLFRTLYPGIRRTDGKSSPEDTQGLGFLRLHSTYRHDLKIYASDEGRVQTTAAAFAKGLLALEGELTPILMQMVKSANTDGLLDDDCQARLYQTELKRYLHKALQADRDFTPQDYLELNPNGLRAITAAMEFIKNPRKMCHEIAGYVEKMCGVIVEYSQTRPTGSTLYLQESMDLAQRRWNKELREFRRKNKHGEVEFDISKIPDIYDNIKYDMEHNPDLCINNEVEFERMYVCVKNMADIVVPQEYGIKTENKMVIAQRVCTPLLRKIRNDLHRCLENKESEETQTRLDPRASQGIATPFRHVRTRLYFTSESHIHTLMNLIRYGNLCSVDDKKWQRAMNFLSGVTEFNYMTQVVLMVYEDSRKENDEADTGPRFHIEILFSPGLYPCFLTEKERIYETRFNLSTNPKPATSSRSSGRESRDTNDSASSSTEGRRPSIEKVVTVVTPTQLSTPSVTNDDLSISSNAESTAAESTGLVNTTTKTHNDSEDDLNDVESVNLVALDELNNTTKAMADDGKTAKRQRSVTGAEKSMEEGDKPHGEWKGNGVAKSGSQISVGSNEMESNNESMETVGGGKGQWVKDLLDQTKRAMAMNSIREVEPPIVIPTPVPSTTTAVVEDEASERQSRSRRYFPYRFKHHTAQLLTGMSGGGVHMQNRLISTDVLTGKFGDHDNKKNSRKDFGAGTAVLSTAVIARSSSAPRLMTYESEDFSVGEIKRFWPPLRSLETLHDSINLSQFDGFLERLIKGALTPLPSPPKTPLPSALSCDAINKTPTQDEVEKVIGKLAPTSSTD.

26–27 contributes to the substrate binding site; it reads RK. ATP-binding positions include Arg-109, Lys-162, His-169, Arg-188, 212–215, and 221–223; these read EEFI and DVK. 188 to 189 is a substrate binding site; it reads RK. The substrate site is built by Lys-223 and Arg-237. Residues Asp-284 and 296–298 contribute to the ATP site; that span reads DVN. A substrate-binding site is contributed by 301–304; the sequence is SFVK. The polyphosphoinositide-binding domain stretch occupies residues 355–426; the sequence is TTPSGKLAEL…VLELARALVI (72 aa). Polar residues-rich tracts occupy residues 933-947 and 977-992; these read FNLS…SSRS and VTPT…NDDL. Disordered stretches follow at residues 933 to 1022, 1043 to 1107, and 1134 to 1155; these read FNLS…SEDD, AMAD…GGGK, and IVIP…ASER. Residues 993 to 1006 show a composition bias toward low complexity; it reads SISSNAESTAAEST. The segment covering 1062–1074 has biased composition (basic and acidic residues); that stretch reads KSMEEGDKPHGEW. Positions 1090 to 1101 are enriched in low complexity; it reads SNEMESNNESME.

The protein belongs to the histidine acid phosphatase family. VIP1 subfamily.

Its subcellular location is the cytoplasm. The protein localises to the cytosol. It catalyses the reaction 1D-myo-inositol hexakisphosphate + ATP = 1-diphospho-1D-myo-inositol 2,3,4,5,6-pentakisphosphate + ADP. It carries out the reaction 5-diphospho-1D-myo-inositol 1,2,3,4,6-pentakisphosphate + ATP + H(+) = 1,5-bis(diphospho)-1D-myo-inositol 2,3,4,6-tetrakisphosphate + ADP. Its function is as follows. Bifunctional inositol kinase that acts in concert with the IP6K kinases to synthesize the diphosphate group-containing inositol pyrophosphates diphosphoinositol pentakisphosphate, PP-InsP5, and bis-diphosphoinositol tetrakisphosphate, (PP)2-InsP4. PP-InsP5 and (PP)2-InsP4, also respectively called InsP7 and InsP8, may regulate a variety of cellular processes, including apoptosis, vesicle trafficking, cytoskeletal dynamics, and exocytosis. Phosphorylates inositol hexakisphosphate (InsP6) at position 1 to produce PP-InsP5 which is in turn phosphorylated by IP6Ks to produce (PP)2-InsP4. Alternatively, phosphorylates PP-InsP5 at position 1, produced by IP6Ks from InsP6, to produce (PP)2-InsP4. The protein is Inositol hexakisphosphate and diphosphoinositol-pentakisphosphate kinase of Caenorhabditis elegans.